Consider the following 185-residue polypeptide: Capsid protein (185 aa).

The interval 136–185 (NAPILSTLPETTVVRRRDRGRSPRRRTPSPRRRRSQSPRRRRSQSRESQC) is disordered. A compositionally biased stretch (basic residues) spans 149 to 178 (VRRRDRGRSPRRRTPSPRRRRSQSPRRRRS). Phosphoserine; by host occurs at positions 157, 164, and 172. The stretch at 157–163 (SPRRRTP) is one 1; half-length repeat. The 3 X 8 AA repeats of S-P-R-R-R-[PR]-S-Q stretch occupies residues 157–179 (SPRRRTPSPRRRRSQSPRRRRSQ). A Bipartite nuclear localization signal motif is present at residues 160–177 (RRTPSPRRRRSQSPRRRR). Repeat copies occupy residues 164 to 171 (SPRRRRSQ) and 172 to 179 (SPRRRRSQ). Positions 179–185 (QSRESQC) are RNA binding.

It belongs to the orthohepadnavirus core antigen family. Homodimerizes, then multimerizes. Interacts with cytosol exposed regions of viral L glycoprotein present in the reticulum-to-Golgi compartment. Interacts with human FLNB. Phosphorylated form interacts with host importin alpha; this interaction depends on the exposure of the NLS, which itself depends upon genome maturation and/or phosphorylation of the capsid protein. Interacts with host NUP153. Phosphorylated by host SRPK1, SRPK2, and maybe protein kinase C or GAPDH. Phosphorylation is critical for pregenomic RNA packaging. Protein kinase C phosphorylation is stimulated by HBx protein and may play a role in transport of the viral genome to the nucleus at the late step during the viral replication cycle.

The protein localises to the virion. It is found in the host cytoplasm. Functionally, self assembles to form an icosahedral capsid. Most capsids appear to be large particles with an icosahedral symmetry of T=4 and consist of 240 copies of capsid protein, though a fraction forms smaller T=3 particles consisting of 180 capsid proteins. Entering capsids are transported along microtubules to the nucleus. Phosphorylation of the capsid is thought to induce exposure of nuclear localization signal in the C-terminal portion of the capsid protein that allows binding to the nuclear pore complex via the importin (karyopherin-) alpha and beta. Capsids are imported in intact form through the nuclear pore into the nuclear basket, where it probably binds NUP153. Only capsids that contain the mature viral genome can release the viral DNA and capsid protein into the nucleoplasm. Immature capsids get stuck in the basket. Capsids encapsulate the pre-genomic RNA and the P protein. Pre-genomic RNA is reverse-transcribed into DNA while the capsid is still in the cytoplasm. The capsid can then either be directed to the nucleus, providing more genomes for transcription, or bud through the endoplasmic reticulum to provide new virions. This Homo sapiens (Human) protein is Capsid protein.